Reading from the N-terminus, the 258-residue chain is 5'-nucleotidase SurE (258 aa).

4 residues coordinate a divalent metal cation: Asp-8, Asp-9, Ser-40, and Asn-98.

This sequence belongs to the SurE nucleotidase family. A divalent metal cation is required as a cofactor.

The protein localises to the cytoplasm. It carries out the reaction a ribonucleoside 5'-phosphate + H2O = a ribonucleoside + phosphate. Functionally, nucleotidase that shows phosphatase activity on nucleoside 5'-monophosphates. This chain is 5'-nucleotidase SurE, found in Synechococcus elongatus (strain ATCC 33912 / PCC 7942 / FACHB-805) (Anacystis nidulans R2).